Reading from the N-terminus, the 228-residue chain is Ribose-5-phosphate isomerase A (228 aa).

Residues 31-34 (TGST), 85-88 (DGAD), and 97-100 (KGGG) each bind substrate. The active-site Proton acceptor is the Glu106. Residue Lys124 participates in substrate binding.

This sequence belongs to the ribose 5-phosphate isomerase family. In terms of assembly, homodimer.

The enzyme catalyses aldehydo-D-ribose 5-phosphate = D-ribulose 5-phosphate. The protein operates within carbohydrate degradation; pentose phosphate pathway; D-ribose 5-phosphate from D-ribulose 5-phosphate (non-oxidative stage): step 1/1. Its function is as follows. Catalyzes the reversible conversion of ribose-5-phosphate to ribulose 5-phosphate. The sequence is that of Ribose-5-phosphate isomerase A from Haloarcula marismortui (strain ATCC 43049 / DSM 3752 / JCM 8966 / VKM B-1809) (Halobacterium marismortui).